A 438-amino-acid polypeptide reads, in one-letter code: 23S rRNA (uracil(1939)-C(5))-methyltransferase RlmD (438 aa).

Positions 11 to 69 constitute a TRAM domain; sequence LQPESKHQQVLVEKLDHQGAGIAYLNKKPLFIDGTLPGEEVVTQLTESKSKFARGKLIK. [4Fe-4S] cluster-binding residues include cysteine 82, cysteine 88, cysteine 91, and cysteine 169. S-adenosyl-L-methionine-binding residues include glutamine 272, phenylalanine 301, asparagine 306, glutamate 322, asparagine 349, and aspartate 370. Cysteine 396 serves as the catalytic Nucleophile.

This sequence belongs to the class I-like SAM-binding methyltransferase superfamily. RNA M5U methyltransferase family. RlmD subfamily.

It catalyses the reaction uridine(1939) in 23S rRNA + S-adenosyl-L-methionine = 5-methyluridine(1939) in 23S rRNA + S-adenosyl-L-homocysteine + H(+). Its function is as follows. Catalyzes the formation of 5-methyl-uridine at position 1939 (m5U1939) in 23S rRNA. The protein is 23S rRNA (uracil(1939)-C(5))-methyltransferase RlmD of Vibrio vulnificus (strain CMCP6).